The chain runs to 140 residues: Chorion class A protein Ld2/Ld41 (140 aa).

The signal sequence occupies residues M1–S21.

Belongs to the chorion protein family.

Its function is as follows. This protein is one of many from the eggshell of the gypsy moth. The sequence is that of Chorion class A protein Ld2/Ld41 from Lymantria dispar (Gypsy moth).